Here is a 374-residue protein sequence, read N- to C-terminus: Phosphate acyltransferase (374 aa).

The protein belongs to the PlsX family. In terms of assembly, homodimer. Probably interacts with PlsY.

It localises to the cytoplasm. It carries out the reaction a fatty acyl-[ACP] + phosphate = an acyl phosphate + holo-[ACP]. The protein operates within lipid metabolism; phospholipid metabolism. Functionally, catalyzes the reversible formation of acyl-phosphate (acyl-PO(4)) from acyl-[acyl-carrier-protein] (acyl-ACP). This enzyme utilizes acyl-ACP as fatty acyl donor, but not acyl-CoA. This chain is Phosphate acyltransferase, found in Gluconacetobacter diazotrophicus (strain ATCC 49037 / DSM 5601 / CCUG 37298 / CIP 103539 / LMG 7603 / PAl5).